The following is a 435-amino-acid chain: Oocyte zinc finger protein XlCOF22 (435 aa).

Residues 71–92 (NANTSAHFSRNRDSDKHERTHT) are disordered. Residues 80 to 91 (RNRDSDKHERTH) show a composition bias toward basic and acidic residues. C2H2-type zinc fingers lie at residues 97–120 (HSCSQCGKCFSSSSDLLAHRRQSH), 126–148 (FSCSECGKCFSFRSRLIDHQRTH), 154–176 (FCCFQCGKSFSVRSRFLDHRRTH), 182–204 (FSCLECGKCFLFRSRLLEHQRTH), 210–232 (FSCLKCGKCFSVRSRLKDHQRTH), 238–260 (FSCLECGKSFSFRPCLIDHQRTH), 266–288 (FSCFQCGKCFSFQSRLINHQRTH), 294–316 (FSCSECGKSFSNQSCLRVHQRTH), 322–345 (YSCSECGKSFVTSSQLAVHRRRTH), 351–373 (FSCSECGKCFSNQSCLRVHQRTH), 379–402 (FSCSECGKSFVTSSKLASHQRQTH), and 408–430 (VSCSECGKCFTRKRSLKVHFKIH).

The protein belongs to the krueppel C2H2-type zinc-finger protein family.

The protein localises to the nucleus. Functionally, may be involved in transcriptional regulation. In Xenopus laevis (African clawed frog), this protein is Oocyte zinc finger protein XlCOF22.